The sequence spans 236 residues: Endonuclease V (236 aa).

Residues Asp47 and Asp115 each contribute to the Mg(2+) site.

It belongs to the endonuclease V family. Requires Mg(2+) as cofactor.

The protein localises to the cytoplasm. The catalysed reaction is Endonucleolytic cleavage at apurinic or apyrimidinic sites to products with a 5'-phosphate.. In terms of biological role, DNA repair enzyme involved in the repair of deaminated bases. Selectively cleaves double-stranded DNA at the second phosphodiester bond 3' to a deoxyinosine leaving behind the intact lesion on the nicked DNA. The polypeptide is Endonuclease V (Xanthomonas campestris pv. campestris (strain 8004)).